Here is a 430-residue protein sequence, read N- to C-terminus: DNA-binding protein cre-1 (430 aa).

Polar residues predominate over residues methionine 1 to serine 19. Disordered stretches follow at residues methionine 1–proline 77, isoleucine 97–tyrosine 187, serine 265–serine 340, and leucine 357–leucine 430. Positions proline 30 to proline 46 are enriched in low complexity. C2H2-type zinc fingers lie at residues tyrosine 78 to histidine 100 and histidine 106 to histidine 130. Positions isoleucine 97–histidine 106 are enriched in basic and acidic residues. Composition is skewed to polar residues over residues histidine 130–histidine 147 and alanine 175–tyrosine 187. Over residues histidine 268–tyrosine 277 the composition is skewed to basic and acidic residues. Residues proline 289–serine 303 are compositionally biased toward low complexity. The segment covering serine 412–serine 422 has biased composition (polar residues).

It belongs to the creA/MIG C2H2-type zinc-finger protein family.

Its subcellular location is the nucleus. Involved in carbon catabolite repression. Represses the transcription of a number of genes by binding to a GC-rich region in their promoter. In Neurospora crassa (strain ATCC 24698 / 74-OR23-1A / CBS 708.71 / DSM 1257 / FGSC 987), this protein is DNA-binding protein cre-1 (cre-1).